A 254-amino-acid chain; its full sequence is 3-deoxy-manno-octulosonate cytidylyltransferase (254 aa).

It belongs to the KdsB family.

It is found in the cytoplasm. It catalyses the reaction 3-deoxy-alpha-D-manno-oct-2-ulosonate + CTP = CMP-3-deoxy-beta-D-manno-octulosonate + diphosphate. It functions in the pathway nucleotide-sugar biosynthesis; CMP-3-deoxy-D-manno-octulosonate biosynthesis; CMP-3-deoxy-D-manno-octulosonate from 3-deoxy-D-manno-octulosonate and CTP: step 1/1. The protein operates within bacterial outer membrane biogenesis; lipopolysaccharide biosynthesis. Functionally, activates KDO (a required 8-carbon sugar) for incorporation into bacterial lipopolysaccharide in Gram-negative bacteria. This Polynucleobacter necessarius subsp. necessarius (strain STIR1) protein is 3-deoxy-manno-octulosonate cytidylyltransferase.